A 391-amino-acid chain; its full sequence is Succinyl-diaminopimelate desuccinylase (391 aa).

Position 67 (H67) interacts with Zn(2+). D69 is an active-site residue. Position 101 (D101) interacts with Zn(2+). The Proton acceptor role is filled by E135. Residues E136, E164, and H353 each contribute to the Zn(2+) site.

It belongs to the peptidase M20A family. DapE subfamily. In terms of assembly, homodimer. Zn(2+) serves as cofactor. Co(2+) is required as a cofactor.

It catalyses the reaction N-succinyl-(2S,6S)-2,6-diaminopimelate + H2O = (2S,6S)-2,6-diaminopimelate + succinate. It functions in the pathway amino-acid biosynthesis; L-lysine biosynthesis via DAP pathway; LL-2,6-diaminopimelate from (S)-tetrahydrodipicolinate (succinylase route): step 3/3. Its function is as follows. Catalyzes the hydrolysis of N-succinyl-L,L-diaminopimelic acid (SDAP), forming succinate and LL-2,6-diaminopimelate (DAP), an intermediate involved in the bacterial biosynthesis of lysine and meso-diaminopimelic acid, an essential component of bacterial cell walls. This is Succinyl-diaminopimelate desuccinylase from Rickettsia bellii (strain OSU 85-389).